The primary structure comprises 228 residues: Endonuclease V (228 aa).

Positions 36 and 104 each coordinate Mg(2+).

The protein belongs to the endonuclease V family. It depends on Mg(2+) as a cofactor.

It is found in the cytoplasm. It catalyses the reaction Endonucleolytic cleavage at apurinic or apyrimidinic sites to products with a 5'-phosphate.. DNA repair enzyme involved in the repair of deaminated bases. Selectively cleaves double-stranded DNA at the second phosphodiester bond 3' to a deoxyinosine leaving behind the intact lesion on the nicked DNA. This Serratia proteamaculans (strain 568) protein is Endonuclease V.